A 123-amino-acid chain; its full sequence is MGFLHKLWDETVAGPTPDNGLGKLRKHDSLSTVRSSPPSLSSDQVTRSIMVTKGNNNVRGLRKLKMDPDSPTCSSSNPGTPLTPGTPCYALGPFTAGKIPSSGEDDAASLTTYEWIVINALDR.

A disordered region spans residues 7–86; that stretch reads LWDETVAGPT…NPGTPLTPGT (80 aa). Low complexity predominate over residues 30-46; sequence LSTVRSSPPSLSSDQVT. Composition is skewed to polar residues over residues 47–58 and 71–80; these read RSIMVTKGNNNV and PTCSSSNPGT. Serine 74 carries the post-translational modification Phosphoserine.

It belongs to the DRM1/ARP family.

The chain is Dormancy-associated protein homolog 4 from Arabidopsis thaliana (Mouse-ear cress).